Reading from the N-terminus, the 253-residue chain is Imidazole glycerol phosphate synthase subunit HisF (253 aa).

Catalysis depends on residues aspartate 11 and aspartate 130.

The protein belongs to the HisA/HisF family. In terms of assembly, heterodimer of HisH and HisF.

It localises to the cytoplasm. The enzyme catalyses 5-[(5-phospho-1-deoxy-D-ribulos-1-ylimino)methylamino]-1-(5-phospho-beta-D-ribosyl)imidazole-4-carboxamide + L-glutamine = D-erythro-1-(imidazol-4-yl)glycerol 3-phosphate + 5-amino-1-(5-phospho-beta-D-ribosyl)imidazole-4-carboxamide + L-glutamate + H(+). Its pathway is amino-acid biosynthesis; L-histidine biosynthesis; L-histidine from 5-phospho-alpha-D-ribose 1-diphosphate: step 5/9. Its function is as follows. IGPS catalyzes the conversion of PRFAR and glutamine to IGP, AICAR and glutamate. The HisF subunit catalyzes the cyclization activity that produces IGP and AICAR from PRFAR using the ammonia provided by the HisH subunit. In Cereibacter sphaeroides (strain ATCC 17025 / ATH 2.4.3) (Rhodobacter sphaeroides), this protein is Imidazole glycerol phosphate synthase subunit HisF.